The following is a 429-amino-acid chain: 3-phosphoshikimate 1-carboxyvinyltransferase (429 aa).

3 residues coordinate 3-phosphoshikimate: K22, S23, and R27. K22 is a phosphoenolpyruvate binding site. 2 residues coordinate phosphoenolpyruvate: G94 and R122. 3-phosphoshikimate-binding residues include S167, Q169, D315, and K342. Phosphoenolpyruvate is bound at residue Q169. D315 serves as the catalytic Proton acceptor. R346 and R388 together coordinate phosphoenolpyruvate.

Belongs to the EPSP synthase family. In terms of assembly, monomer.

It is found in the cytoplasm. The catalysed reaction is 3-phosphoshikimate + phosphoenolpyruvate = 5-O-(1-carboxyvinyl)-3-phosphoshikimate + phosphate. It participates in metabolic intermediate biosynthesis; chorismate biosynthesis; chorismate from D-erythrose 4-phosphate and phosphoenolpyruvate: step 6/7. Functionally, catalyzes the transfer of the enolpyruvyl moiety of phosphoenolpyruvate (PEP) to the 5-hydroxyl of shikimate-3-phosphate (S3P) to produce enolpyruvyl shikimate-3-phosphate and inorganic phosphate. This Geobacter sp. (strain M21) protein is 3-phosphoshikimate 1-carboxyvinyltransferase.